The primary structure comprises 218 residues: Adenylate kinase (218 aa).

Residue 11–16 (GAGKGT) coordinates ATP. Positions 31–60 (STGDMFREAMANKTKVGLEAKSYIDKGNLV) are NMP. Residues threonine 32, arginine 37, 58–60 (NLV), 86–89 (GFPR), and glutamine 93 each bind AMP. The LID stretch occupies residues 127–165 (ARYMCKNCGATYNKLSKQPKVEGTCDRCGSHEFYQREDD). Arginine 128 is an ATP binding site. Zn(2+) is bound by residues cysteine 131 and cysteine 134. 137 to 138 (TY) serves as a coordination point for ATP. Positions 151 and 154 each coordinate Zn(2+). Positions 162 and 173 each coordinate AMP. An ATP-binding site is contributed by glutamine 201.

It belongs to the adenylate kinase family. As to quaternary structure, monomer.

The protein localises to the cytoplasm. It catalyses the reaction AMP + ATP = 2 ADP. It participates in purine metabolism; AMP biosynthesis via salvage pathway; AMP from ADP: step 1/1. Its function is as follows. Catalyzes the reversible transfer of the terminal phosphate group between ATP and AMP. Plays an important role in cellular energy homeostasis and in adenine nucleotide metabolism. This Lactobacillus helveticus (strain DPC 4571) protein is Adenylate kinase.